The sequence spans 221 residues: Histone H1.3 (221 aa).

Positions 1–17 (MSETAPAAPAAPAPVEK) are enriched in low complexity. Residues 1 to 42 (MSETAPAAPAAPAPVEKTPVKKKAKKTGAAAGKRKASGPPVS) form a disordered region. Ser-2 carries the N-acetylserine modification. A Phosphoserine modification is found at Ser-2. Lys-17 is modified (N6-acetyllysine). Thr-18 is subject to Phosphothreonine. Over residues 20–36 (VKKKAKKTGAAAGKRKA) the composition is skewed to basic residues. An N6-(beta-hydroxybutyryl)lysine mark is found at Lys-33, Lys-35, and Lys-53. The H15 domain occupies 37 to 110 (SGPPVSELIT…GASGSFKLNK (74 aa)). Position 55 is a citrulline (Arg-55). N6-(beta-hydroxybutyryl)lysine occurs at positions 65, 86, and 91. The segment at 92-221 (GTLVQTKGTG…KAKKAAPRKK (130 aa)) is disordered. Ser-105 is modified (phosphoserine; by PKC). N6-(beta-hydroxybutyryl)lysine is present on residues Lys-107 and Lys-141. Basic residues-rich tracts occupy residues 120–141 (KAKK…KPKK), 150–161 (KTAKKTPKKAKK), 170–187 (KVSK…KKAA), and 194–221 (KAPK…PRKK).

Belongs to the histone H1/H5 family. In terms of processing, H1 histones are progressively phosphorylated during the cell cycle, becoming maximally phosphorylated during late G2 phase and M phase, and being dephosphorylated sharply thereafter. Hydroxybutyrylation of histones is induced by starvation. Post-translationally, citrullination at Arg-55 (H1R54ci) by PADI4 takes place within the DNA-binding site of H1 and results in its displacement from chromatin and global chromatin decondensation, thereby promoting pluripotency and stem cell maintenance.

The protein localises to the nucleus. It is found in the chromosome. Its function is as follows. Histone H1 protein binds to linker DNA between nucleosomes forming the macromolecular structure known as the chromatin fiber. Histones H1 are necessary for the condensation of nucleosome chains into higher-order structured fibers. Also acts as a regulator of individual gene transcription through chromatin remodeling, nucleosome spacing and DNA methylation. The polypeptide is Histone H1.3 (Mus musculus (Mouse)).